A 384-amino-acid chain; its full sequence is Eukaryotic translation initiation factor 3 subunit M (384 aa).

The PCI domain occupies 184–346; sequence ENRKAIEAMI…KKILITGAFP (163 aa).

Belongs to the eIF-3 subunit M family. As to quaternary structure, component of the eukaryotic translation initiation factor 3 (eIF-3) complex.

The protein localises to the cytoplasm. Component of the eukaryotic translation initiation factor 3 (eIF-3) complex, which is involved in protein synthesis of a specialized repertoire of mRNAs and, together with other initiation factors, stimulates binding of mRNA and methionyl-tRNAi to the 40S ribosome. The eIF-3 complex specifically targets and initiates translation of a subset of mRNAs involved in cell proliferation. This chain is Eukaryotic translation initiation factor 3 subunit M, found in Schistosoma japonicum (Blood fluke).